The primary structure comprises 198 residues: Inner membrane-spanning protein YciB (198 aa).

Transmembrane regions (helical) follow at residues 36–56 (IFSA…ILYL), 67–87 (LTLV…SETF), 90–110 (WKAP…HFIG), 133–153 (LNIA…YVAF), and 162–182 (FKVF…GIYL).

Belongs to the YciB family.

It is found in the cell inner membrane. Its function is as follows. Plays a role in cell envelope biogenesis, maintenance of cell envelope integrity and membrane homeostasis. This Pseudomonas savastanoi pv. phaseolicola (strain 1448A / Race 6) (Pseudomonas syringae pv. phaseolicola (strain 1448A / Race 6)) protein is Inner membrane-spanning protein YciB.